Consider the following 137-residue polypeptide: Translation initiation factor 2 subunit beta (137 aa).

The protein belongs to the eIF-2-beta/eIF-5 family. As to quaternary structure, heterotrimer composed of an alpha, a beta and a gamma chain.

In terms of biological role, eIF-2 functions in the early steps of protein synthesis by forming a ternary complex with GTP and initiator tRNA. The sequence is that of Translation initiation factor 2 subunit beta (eif2b) from Archaeoglobus fulgidus (strain ATCC 49558 / DSM 4304 / JCM 9628 / NBRC 100126 / VC-16).